The primary structure comprises 360 residues: Phospho-N-acetylmuramoyl-pentapeptide-transferase (360 aa).

A run of 10 helical transmembrane segments spans residues 2–22, 52–72, 80–100, 114–134, 156–176, 189–209, 235–255, 259–279, 284–304, and 338–358; these read IAILVSGAVGLLVSLFGTPLF, MGGVVIIAATVLGYTVANISA, GLLLLFLMIGLGVIGFLDDFI, WKIIGQGVIGVTFSVLALQFP, LAFAGAAVGLVLFVIWANFLI, LDGLATGVSVFVFSAYVVVTM, LAIVTAAIVGACAGFLWWNAS, IFMGDTGALALGGALAGLSIL, FLAVIIGGLFVVIVLSDVIQI, and FWLIAALFVALGVGIFYAEWV.

The protein belongs to the glycosyltransferase 4 family. MraY subfamily. Requires Mg(2+) as cofactor.

It localises to the cell membrane. It catalyses the reaction UDP-N-acetyl-alpha-D-muramoyl-L-alanyl-gamma-D-glutamyl-meso-2,6-diaminopimeloyl-D-alanyl-D-alanine + di-trans,octa-cis-undecaprenyl phosphate = di-trans,octa-cis-undecaprenyl diphospho-N-acetyl-alpha-D-muramoyl-L-alanyl-D-glutamyl-meso-2,6-diaminopimeloyl-D-alanyl-D-alanine + UMP. It participates in cell wall biogenesis; peptidoglycan biosynthesis. Its function is as follows. Catalyzes the initial step of the lipid cycle reactions in the biosynthesis of the cell wall peptidoglycan: transfers peptidoglycan precursor phospho-MurNAc-pentapeptide from UDP-MurNAc-pentapeptide onto the lipid carrier undecaprenyl phosphate, yielding undecaprenyl-pyrophosphoryl-MurNAc-pentapeptide, known as lipid I. This Beutenbergia cavernae (strain ATCC BAA-8 / DSM 12333 / CCUG 43141 / JCM 11478 / NBRC 16432 / NCIMB 13614 / HKI 0122) protein is Phospho-N-acetylmuramoyl-pentapeptide-transferase.